Reading from the N-terminus, the 420-residue chain is UDP-N-acetylglucosamine 1-carboxyvinyltransferase (420 aa).

22-23 (KN) lines the phosphoenolpyruvate pocket. A UDP-N-acetyl-alpha-D-glucosamine-binding site is contributed by Arg93. Residue Cys117 is the Proton donor of the active site. Cys117 is subject to 2-(S-cysteinyl)pyruvic acid O-phosphothioketal. The UDP-N-acetyl-alpha-D-glucosamine site is built by Asp307 and Ile329.

This sequence belongs to the EPSP synthase family. MurA subfamily.

The protein localises to the cytoplasm. The enzyme catalyses phosphoenolpyruvate + UDP-N-acetyl-alpha-D-glucosamine = UDP-N-acetyl-3-O-(1-carboxyvinyl)-alpha-D-glucosamine + phosphate. Its pathway is cell wall biogenesis; peptidoglycan biosynthesis. In terms of biological role, cell wall formation. Adds enolpyruvyl to UDP-N-acetylglucosamine. This Alteromonas mediterranea (strain DSM 17117 / CIP 110805 / LMG 28347 / Deep ecotype) protein is UDP-N-acetylglucosamine 1-carboxyvinyltransferase.